The primary structure comprises 113 residues: Large ribosomal subunit protein uL24 (113 aa).

Belongs to the universal ribosomal protein uL24 family. Part of the 50S ribosomal subunit.

One of two assembly initiator proteins, it binds directly to the 5'-end of the 23S rRNA, where it nucleates assembly of the 50S subunit. Functionally, one of the proteins that surrounds the polypeptide exit tunnel on the outside of the subunit. This Fusobacterium nucleatum subsp. nucleatum (strain ATCC 25586 / DSM 15643 / BCRC 10681 / CIP 101130 / JCM 8532 / KCTC 2640 / LMG 13131 / VPI 4355) protein is Large ribosomal subunit protein uL24 (rplX).